A 582-amino-acid polypeptide reads, in one-letter code: Aspartate--tRNA ligase (582 aa).

Residue glutamate 174 coordinates L-aspartate. An aspartate region spans residues 198–201 (QITK). Arginine 220 contributes to the L-aspartate binding site. ATP is bound by residues 220-222 (RDE) and glutamine 229. Histidine 443 provides a ligand contact to L-aspartate. Glutamate 477 contacts ATP. Arginine 484 contributes to the L-aspartate binding site. 529-532 (GLDR) lines the ATP pocket.

It belongs to the class-II aminoacyl-tRNA synthetase family. Type 1 subfamily. As to quaternary structure, homodimer.

The protein resides in the cytoplasm. It catalyses the reaction tRNA(Asp) + L-aspartate + ATP = L-aspartyl-tRNA(Asp) + AMP + diphosphate. Functionally, catalyzes the attachment of L-aspartate to tRNA(Asp) in a two-step reaction: L-aspartate is first activated by ATP to form Asp-AMP and then transferred to the acceptor end of tRNA(Asp). The chain is Aspartate--tRNA ligase from Streptococcus pyogenes serotype M6 (strain ATCC BAA-946 / MGAS10394).